The chain runs to 113 residues: Protein translation factor SUI1 homolog (113 aa).

It belongs to the SUI1 family.

In terms of biological role, probably involved in translation. This is Protein translation factor SUI1 homolog from Salix bakko (Japanese willow).